Here is a 479-residue protein sequence, read N- to C-terminus: Anaerobic nitric oxide reductase flavorubredoxin (479 aa).

The tract at residues 30 to 210 (LRGSSYNSYL…PFSRLVTPKI (181 aa)) is zinc metallo-hydrolase. Residues His-79, Glu-81, Asp-83, His-147, Asp-166, and His-227 each contribute to the Fe cation site. A Flavodoxin-like domain is found at 254-393 (ITIFYDTMSN…LCRQHGRDIA (140 aa)). FMN contacts are provided by residues 260–264 (TMSNN) and 342–369 (AFGS…EMSL). A Rubredoxin-like domain is found at 423–474 (GPKMQCSVCQWIYDPALGEPLQDVAPGTPWSDVPDNFLCPECSLGKDVFDVL). Cys-428, Cys-431, Cys-461, and Cys-464 together coordinate Fe cation.

This sequence in the N-terminal section; belongs to the zinc metallo-hydrolase group 3 family. As to quaternary structure, homotetramer. Requires Fe cation as cofactor. The cofactor is FMN.

The protein resides in the cytoplasm. It participates in nitrogen metabolism; nitric oxide reduction. Anaerobic nitric oxide reductase; uses NADH to detoxify nitric oxide (NO), protecting several 4Fe-4S NO-sensitive enzymes. Has at least 2 reductase partners, only one of which (NorW, flavorubredoxin reductase) has been identified. NO probably binds to the di-iron center; electrons enter from the NorW at rubredoxin and are transferred sequentially to the FMN center and the di-iron center. Also able to function as an aerobic oxygen reductase. In Salmonella paratyphi B (strain ATCC BAA-1250 / SPB7), this protein is Anaerobic nitric oxide reductase flavorubredoxin.